We begin with the raw amino-acid sequence, 182 residues long: Transcriptional repressor NrdR (182 aa).

The tract at residues 1-24 (MRCPYCGGLDTQVRDSRPTEDNTA) is disordered. A zinc finger lies at 3 to 34 (CPYCGGLDTQVRDSRPTEDNTAIRRRRICPDC). A compositionally biased stretch (basic and acidic residues) spans 12–24 (QVRDSRPTEDNTA). In terms of domain architecture, ATP-cone spans 49-139 (LMVLKRSGRR…VYRNFREAKD (91 aa)). The tract at residues 146-182 (ELSQPELAQSDDVKAEGGAEGGRDKPKAAGKPPRSAE) is disordered. Positions 156–172 (DDVKAEGGAEGGRDKPK) are enriched in basic and acidic residues.

Belongs to the NrdR family. Requires Zn(2+) as cofactor.

In terms of biological role, negatively regulates transcription of bacterial ribonucleotide reductase nrd genes and operons by binding to NrdR-boxes. The sequence is that of Transcriptional repressor NrdR from Xanthobacter autotrophicus (strain ATCC BAA-1158 / Py2).